The following is a 136-amino-acid chain: ATP synthase F(0) complex subunit C1, mitochondrial (136 aa).

A mitochondrion-targeting transit peptide spans 1–61 (MQTTGALLIS…REFQTSVVSR (61 aa)). Residues 77–97 (VGVAGSGAGIGTVFGSLIIGY) traverse the membrane as a helical segment. Position 104 is an N6,N6,N6-trimethyllysine (lysine 104). The chain crosses the membrane as a helical span at residues 112–132 (ILGFALSEAMGLFCLMVAFLI).

This sequence belongs to the ATPase C chain family. In terms of assembly, homooctamer; the c-ring consists of eight c subunits forming a circle, and each subunit adopts a hairpin shape. Component of the ATP synthase complex composed at least of ATP5F1A/subunit alpha, ATP5F1B/subunit beta, ATP5MC1/subunit c (homooctomer), MT-ATP6/subunit a, MT-ATP8/subunit 8, ATP5ME/subunit e, ATP5MF/subunit f, ATP5MG/subunit g, ATP5MK/subunit k, ATP5MJ/subunit j, ATP5F1C/subunit gamma, ATP5F1D/subunit delta, ATP5F1E/subunit epsilon, ATP5PF/subunit F6, ATP5PB/subunit b, ATP5PD/subunit d, ATP5PO/subunit OSCP. ATP synthase complex consists of a soluble F(1) head domain (subunits alpha(3) and beta(3)) - the catalytic core - and a membrane F(0) domain - the membrane proton channel (subunits c, a, 8, e, f, g, k and j). These two domains are linked by a central stalk (subunits gamma, delta, and epsilon) rotating inside the F1 region and a stationary peripheral stalk (subunits F6, b, d, and OSCP). Interacts with TMEM70 (homooligomer form); this interaction facilitates the oligomer formation of subunit c/ATP5MC1 (c-ring) and the c-ring membrane insertion and also protects ATP5MC1 against intramitochondrial proteolysis. In terms of processing, trimethylated by ATPSCKMT at Lys-104. Methylation is required for proper incorporation of the C subunit into the ATP synthase complex and mitochondrial respiration.

The protein resides in the mitochondrion membrane. The enzyme catalyses H(+)(in) = H(+)(out). Functionally, subunit c, of the mitochondrial membrane ATP synthase complex (F(1)F(0) ATP synthase or Complex V) that produces ATP from ADP in the presence of a proton gradient across the membrane which is generated by electron transport complexes of the respiratory chain. ATP synthase complex consist of a soluble F(1) head domain - the catalytic core - and a membrane F(1) domain - the membrane proton channel. These two domains are linked by a central stalk rotating inside the F(1) region and a stationary peripheral stalk. During catalysis, ATP synthesis in the catalytic domain of F(1) is coupled via a rotary mechanism of the central stalk subunits to proton translocation. With the subunit a (MT-ATP6), forms the proton-conducting channel in the F(0) domain, that contains two crucial half-channels (inlet and outlet) that facilitate proton movement from the mitochondrial intermembrane space (IMS) into the matrix. Protons are taken up via the inlet half-channel and released through the outlet half-channel, following a Grotthuss mechanism. This chain is ATP synthase F(0) complex subunit C1, mitochondrial, found in Bos taurus (Bovine).